A 65-amino-acid polypeptide reads, in one-letter code: Large ribosomal subunit protein bL35 (65 aa).

This sequence belongs to the bacterial ribosomal protein bL35 family.

The sequence is that of Large ribosomal subunit protein bL35 from Proteus mirabilis (strain HI4320).